Here is a 138-residue protein sequence, read N- to C-terminus: Small ribosomal subunit protein uS11 (138 aa).

Belongs to the universal ribosomal protein uS11 family. As to quaternary structure, part of the 30S ribosomal subunit.

In terms of biological role, located on the platform of the 30S subunit. In Pyrobaculum arsenaticum (strain DSM 13514 / JCM 11321 / PZ6), this protein is Small ribosomal subunit protein uS11.